Consider the following 118-residue polypeptide: Phage-like element PBSX protein XkdH (118 aa).

To B.subtilis YqbH.

This chain is Phage-like element PBSX protein XkdH (xkdH), found in Bacillus subtilis (strain 168).